The following is a 141-amino-acid chain: Protein MGF 100-2L (141 aa).

The protein belongs to the asfivirus MGF 100 family.

Its function is as follows. Plays a role in virus cell tropism, and may be required for efficient virus replication in macrophages. The chain is Protein MGF 100-2L from African swine fever virus (isolate Tick/Malawi/Lil 20-1/1983) (ASFV).